We begin with the raw amino-acid sequence, 77 residues long: Acyl carrier protein (77 aa).

In terms of domain architecture, Carrier spans 2–77 (SDVAEKVKKI…DAIAYIEEKK (76 aa)). Serine 37 bears the O-(pantetheine 4'-phosphoryl)serine mark.

This sequence belongs to the acyl carrier protein (ACP) family. 4'-phosphopantetheine is transferred from CoA to a specific serine of apo-ACP by AcpS. This modification is essential for activity because fatty acids are bound in thioester linkage to the sulfhydryl of the prosthetic group.

It localises to the cytoplasm. It functions in the pathway lipid metabolism; fatty acid biosynthesis. Carrier of the growing fatty acid chain in fatty acid biosynthesis. The sequence is that of Acyl carrier protein from Desulfovibrio desulfuricans (strain ATCC 27774 / DSM 6949 / MB).